A 215-amino-acid chain; its full sequence is Pyrophosphatase PpaX (215 aa).

The active-site Nucleophile is the Asp-9.

The protein belongs to the HAD-like hydrolase superfamily. PpaX family. It depends on Mg(2+) as a cofactor.

The enzyme catalyses diphosphate + H2O = 2 phosphate + H(+). Functionally, hydrolyzes pyrophosphate formed during P-Ser-HPr dephosphorylation by HPrK/P. Might play a role in controlling the intracellular pyrophosphate pool. The polypeptide is Pyrophosphatase PpaX (Bacillus mycoides (strain KBAB4) (Bacillus weihenstephanensis)).